We begin with the raw amino-acid sequence, 688 residues long: UvrABC system protein B (688 aa).

A Helicase ATP-binding domain is found at 31 to 188; the sequence is GRVNAGEPDV…RKFVSMQYQR (158 aa). 44 to 51 serves as a coordination point for ATP; it reads GATGTGKS. A Beta-hairpin motif is present at residues 97-120; that stretch reads YYDYYQPEAYVPQTDTFIEKDSSV. The 154-residue stretch at 434-587 folds into the Helicase C-terminal domain; sequence QIDDLLEQIR…QVAYNTEHGI (154 aa). Positions 607–632 are disordered; that stretch reads GEDTKKMLEGRGGGKRSPTPNLRREG. The UVR domain occupies 642-677; sequence ETIISDLNDQMLQAAGELKFELAARLRDELGDLKRE.

Belongs to the UvrB family. In terms of assembly, forms a heterotetramer with UvrA during the search for lesions. Interacts with UvrC in an incision complex.

The protein resides in the cytoplasm. The UvrABC repair system catalyzes the recognition and processing of DNA lesions. A damage recognition complex composed of 2 UvrA and 2 UvrB subunits scans DNA for abnormalities. Upon binding of the UvrA(2)B(2) complex to a putative damaged site, the DNA wraps around one UvrB monomer. DNA wrap is dependent on ATP binding by UvrB and probably causes local melting of the DNA helix, facilitating insertion of UvrB beta-hairpin between the DNA strands. Then UvrB probes one DNA strand for the presence of a lesion. If a lesion is found the UvrA subunits dissociate and the UvrB-DNA preincision complex is formed. This complex is subsequently bound by UvrC and the second UvrB is released. If no lesion is found, the DNA wraps around the other UvrB subunit that will check the other stand for damage. In Clavibacter sepedonicus (Clavibacter michiganensis subsp. sepedonicus), this protein is UvrABC system protein B.